The chain runs to 218 residues: Small ribosomal subunit protein uS5 (218 aa).

In terms of domain architecture, S5 DRBM spans 66–129; sequence LKQELLNVNL…REAKLNLVPV (64 aa).

Belongs to the universal ribosomal protein uS5 family. In terms of assembly, part of the 30S ribosomal subunit. Contacts protein S4.

In terms of biological role, with S4 and S12 plays an important role in translational accuracy. This Pyrobaculum aerophilum (strain ATCC 51768 / DSM 7523 / JCM 9630 / CIP 104966 / NBRC 100827 / IM2) protein is Small ribosomal subunit protein uS5.